We begin with the raw amino-acid sequence, 532 residues long: O-phosphoserine--tRNA(Cys) ligase (532 aa).

Substrate is bound by residues 188-190, 233-235, 275-276, and N327; these read HMT, SAS, and YY.

Belongs to the class-II aminoacyl-tRNA synthetase family. O-phosphoseryl-tRNA(Cys) synthetase subfamily. In terms of assembly, homotetramer. Interacts with SepCysS.

The catalysed reaction is tRNA(Cys) + O-phospho-L-serine + ATP = O-phospho-L-seryl-tRNA(Cys) + AMP + diphosphate. Catalyzes the attachment of O-phosphoserine (Sep) to tRNA(Cys). The protein is O-phosphoserine--tRNA(Cys) ligase of Methanocella arvoryzae (strain DSM 22066 / NBRC 105507 / MRE50).